A 62-amino-acid chain; its full sequence is Small ribosomal subunit protein eS30z/eS30y/eS30x (62 aa).

Residues 1–38 (MGKVHGSLARAGKVRGQTPKVAKQDKKKKPRGRAHKRL) are disordered. Over residues 25-38 (DKKKKPRGRAHKRL) the composition is skewed to basic residues.

This sequence belongs to the eukaryotic ribosomal protein eS30 family.

The polypeptide is Small ribosomal subunit protein eS30z/eS30y/eS30x (RPS30A) (Arabidopsis thaliana (Mouse-ear cress)).